Reading from the N-terminus, the 859-residue chain is Probable helicase A859L (859 aa).

The 172-residue stretch at 178–349 folds into the Helicase ATP-binding domain; the sequence is YQELQRSGRA…KNRELFGGVA (172 aa). Position 191 to 198 (191 to 198) interacts with ATP; it reads MACRCGKT. The DEAH box signature appears at 298–301; that stretch reads DECH. The 160-residue stretch at 394–553 folds into the Helicase C-terminal domain; that stretch reads QIIMALAYLK…RFYEHLLNPS (160 aa).

The protein belongs to the asfivirus helicase A859L family.

This is Probable helicase A859L from African swine fever virus (isolate Pig/Kenya/KEN-50/1950) (ASFV).